We begin with the raw amino-acid sequence, 142 residues long: Small heat shock protein IbpB (142 aa).

Residues 26-137 (SGESQSFPPY…APQRIAINER (112 aa)) form the sHSP domain.

The protein belongs to the small heat shock protein (HSP20) family. As to quaternary structure, homodimer. Forms homomultimers of about 100-150 subunits at optimal growth temperatures. Conformation changes to oligomers at high temperatures or high ionic concentrations. The decrease in size of the multimers is accompanied by an increase in chaperone activity.

The protein localises to the cytoplasm. In terms of biological role, associates with aggregated proteins, together with IbpA, to stabilize and protect them from irreversible denaturation and extensive proteolysis during heat shock and oxidative stress. Aggregated proteins bound to the IbpAB complex are more efficiently refolded and reactivated by the ATP-dependent chaperone systems ClpB and DnaK/DnaJ/GrpE. Its activity is ATP-independent. In Salmonella newport (strain SL254), this protein is Small heat shock protein IbpB.